The following is a 457-amino-acid chain: Histidine--tRNA ligase (457 aa).

Belongs to the class-II aminoacyl-tRNA synthetase family. In terms of assembly, homodimer.

It localises to the cytoplasm. It catalyses the reaction tRNA(His) + L-histidine + ATP = L-histidyl-tRNA(His) + AMP + diphosphate + H(+). The polypeptide is Histidine--tRNA ligase (Mesoplasma florum (strain ATCC 33453 / NBRC 100688 / NCTC 11704 / L1) (Acholeplasma florum)).